The sequence spans 98 residues: NADH-ubiquinone oxidoreductase chain 4L (98 aa).

The next 3 helical transmembrane spans lie at 1–21 (MSLV…GLLM), 30–50 (LLCL…TILT), and 61–81 (IVLL…LVMV).

The protein belongs to the complex I subunit 4L family. In terms of assembly, core subunit of respiratory chain NADH dehydrogenase (Complex I) which is composed of 45 different subunits.

It is found in the mitochondrion inner membrane. It catalyses the reaction a ubiquinone + NADH + 5 H(+)(in) = a ubiquinol + NAD(+) + 4 H(+)(out). Core subunit of the mitochondrial membrane respiratory chain NADH dehydrogenase (Complex I) which catalyzes electron transfer from NADH through the respiratory chain, using ubiquinone as an electron acceptor. Part of the enzyme membrane arm which is embedded in the lipid bilayer and involved in proton translocation. In Crocidura russula (Greater white-toothed shrew), this protein is NADH-ubiquinone oxidoreductase chain 4L (MT-ND4L).